A 94-amino-acid chain; its full sequence is MTKSELIERLATQQSHIPAKTVEDAVKDMLEHMASTLAQGERIEIRGFGSFSLHYRAPRTGRNPKTGDKVELEGKYVPHFKPGKELRDRANIYG.

The protein belongs to the bacterial histone-like protein family. As to quaternary structure, heterodimer of an alpha and a beta chain.

Functionally, this protein is one of the two subunits of integration host factor, a specific DNA-binding protein that functions in genetic recombination as well as in transcriptional and translational control. This Escherichia coli O127:H6 (strain E2348/69 / EPEC) protein is Integration host factor subunit beta.